The following is a 454-amino-acid chain: CBL-interacting protein kinase 4 (454 aa).

Residues 25–284 enclose the Protein kinase domain; the sequence is YELGRMLGRG…ESLAAHHPWF (260 aa). ATP contacts are provided by residues 31–39 and Lys-54; that span reads LGRGTFAKV. Asp-151 acts as the Proton acceptor in catalysis. The segment at 169-198 is activation loop; it reads DFGLAALPDTLRDDGRLHTACGTPAYAAPE. The NAF domain maps to 311–335; that stretch reads APPPPLNAFDIISMSPGLDLSGLFG. The interval 341-370 is PPI; the sequence is LREKRFTTTASPEKTLEQLGLAGGKLGYVV.

The protein belongs to the protein kinase superfamily. CAMK Ser/Thr protein kinase family. SNF1 subfamily. The cofactor is Mn(2+).

It catalyses the reaction L-seryl-[protein] + ATP = O-phospho-L-seryl-[protein] + ADP + H(+). It carries out the reaction L-threonyl-[protein] + ATP = O-phospho-L-threonyl-[protein] + ADP + H(+). CIPK serine-threonine protein kinases interact with CBL proteins. Binding of a CBL protein to the regulatory NAF domain of CIPK protein lead to the activation of the kinase in a calcium-dependent manner. This is CBL-interacting protein kinase 4 (CIPK4) from Oryza sativa subsp. japonica (Rice).